Reading from the N-terminus, the 332-residue chain is Large ribosomal subunit protein mL44 (332 aa).

A mitochondrion-targeting transit peptide spans 1 to 30; it reads MASGLVRLLQQGPRCLLAPVAPKLVPPVRG. In terms of domain architecture, RNase III spans 86–228; it reads DLLKTAFVNS…LITQMTGKEL (143 aa). The DRBM domain occupies 236–306; sequence NPMGLLVEEL…ARVALRKLYG (71 aa).

The protein belongs to the ribonuclease III family. Mitochondrion-specific ribosomal protein mL44 subfamily. As to quaternary structure, component of the mitochondrial ribosome large subunit (39S) which comprises a 16S rRNA and about 50 distinct proteins.

Its subcellular location is the mitochondrion. In terms of biological role, component of the 39S subunit of mitochondrial ribosome. May have a function in the assembly/stability of nascent mitochondrial polypeptides exiting the ribosome. This is Large ribosomal subunit protein mL44 (MRPL44) from Pongo abelii (Sumatran orangutan).